Reading from the N-terminus, the 212-residue chain is Thymidylate kinase (212 aa).

Residue Gly-13 to Ser-20 coordinates ATP.

It belongs to the thymidylate kinase family.

The catalysed reaction is dTMP + ATP = dTDP + ADP. Functionally, phosphorylation of dTMP to form dTDP in both de novo and salvage pathways of dTTP synthesis. In Legionella pneumophila (strain Paris), this protein is Thymidylate kinase.